The chain runs to 506 residues: Light-independent protochlorophyllide reductase subunit B (506 aa).

Asp36 is a binding site for [4Fe-4S] cluster. Asp279 acts as the Proton donor in catalysis. 414-415 (GL) serves as a coordination point for substrate.

The protein belongs to the ChlB/BchB/BchZ family. As to quaternary structure, protochlorophyllide reductase is composed of three subunits; BchL, BchN and BchB. Forms a heterotetramer of two BchB and two BchN subunits. It depends on [4Fe-4S] cluster as a cofactor.

The catalysed reaction is chlorophyllide a + oxidized 2[4Fe-4S]-[ferredoxin] + 2 ADP + 2 phosphate = protochlorophyllide a + reduced 2[4Fe-4S]-[ferredoxin] + 2 ATP + 2 H2O. It participates in porphyrin-containing compound metabolism; bacteriochlorophyll biosynthesis (light-independent). Its function is as follows. Component of the dark-operative protochlorophyllide reductase (DPOR) that uses Mg-ATP and reduced ferredoxin to reduce ring D of protochlorophyllide (Pchlide) to form chlorophyllide a (Chlide). This reaction is light-independent. The NB-protein (BchN-BchB) is the catalytic component of the complex. This Methylobacterium sp. (strain 4-46) protein is Light-independent protochlorophyllide reductase subunit B.